We begin with the raw amino-acid sequence, 320 residues long: Transaldolase (320 aa).

Lys135 serves as the catalytic Schiff-base intermediate with substrate.

It belongs to the transaldolase family. Type 1 subfamily. In terms of assembly, homodimer.

The protein resides in the cytoplasm. It catalyses the reaction D-sedoheptulose 7-phosphate + D-glyceraldehyde 3-phosphate = D-erythrose 4-phosphate + beta-D-fructose 6-phosphate. The protein operates within carbohydrate degradation; pentose phosphate pathway; D-glyceraldehyde 3-phosphate and beta-D-fructose 6-phosphate from D-ribose 5-phosphate and D-xylulose 5-phosphate (non-oxidative stage): step 2/3. Transaldolase is important for the balance of metabolites in the pentose-phosphate pathway. This Colwellia psychrerythraea (strain 34H / ATCC BAA-681) (Vibrio psychroerythus) protein is Transaldolase.